Here is a 38-residue protein sequence, read N- to C-terminus: Large ribosomal subunit protein bL36 (38 aa).

Belongs to the bacterial ribosomal protein bL36 family.

The sequence is that of Large ribosomal subunit protein bL36 from Cupriavidus metallidurans (strain ATCC 43123 / DSM 2839 / NBRC 102507 / CH34) (Ralstonia metallidurans).